A 443-amino-acid polypeptide reads, in one-letter code: 2-hydroxyethylphosphonate dioxygenase (443 aa).

Residues 8–63 enclose the HTH cro/C1-type 1 domain; that stretch reads LAHWMNARKYTAAQTADLAGLPLDDLRRLLGDEANEPDPAAATALAEALSVEPSQL. Substrate is bound at residue lysine 16. Positions 19–38 form a DNA-binding region, H-T-H motif; the sequence is AAQTADLAGLPLDDLRRLLG. Substrate-binding residues include tyrosine 98 and asparagine 126. Residue histidine 129 coordinates Fe cation. 3 residues coordinate substrate: glutamate 176, histidine 182, and serine 196. Position 182 (histidine 182) interacts with Fe cation. The HTH cro/C1-type 2 domain occupies 234 to 290; the sequence is VLDLFLARRAHTRTSAAEAAGVPPADLEAALRSPASETGLTVLRTLGRALGFDYRVL. The H-T-H motif DNA-binding region spans 245–265; the sequence is TRTSAAEAAGVPPADLEAALR.

This sequence belongs to the non-heme iron-dependent dioxygenase family. In terms of assembly, homodimer. It depends on Fe(2+) as a cofactor.

The catalysed reaction is 2-hydroxyethylphosphonate + O2 = hydroxymethylphosphonate + formate + H(+). The protein operates within secondary metabolite biosynthesis; bialaphos biosynthesis. Non-heme-dependent dioxygenase that catalyzes the conversion of 2-hydroxyethylphosphonate (HEP) to hydroxymethylphosphonate (HMP) in the biosynthesis of phosphinothricin tripeptide (PTT), also known as bialaphos (BA), a natural-product antibiotic and potent herbicide. PTT contains the unusual amino acid phosphinothricin attached to 2 alanine residues. Synthetic phosphinothricin (glufosinate) is a key component of commercial herbicides. The polypeptide is 2-hydroxyethylphosphonate dioxygenase (hepD) (Streptomyces viridochromogenes (strain DSM 40736 / JCM 4977 / BCRC 1201 / Tue 494)).